A 177-amino-acid polypeptide reads, in one-letter code: Alkyl hydroperoxide reductase AhpD (177 aa).

The active-site Proton donor is the Cys130. Cys130 and Cys133 are oxidised to a cystine. The Cysteine sulfenic acid (-SOH) intermediate role is filled by Cys133.

The protein belongs to the AhpD family. In terms of assembly, homotrimer.

The catalysed reaction is N(6)-[(R)-dihydrolipoyl]-L-lysyl-[lipoyl-carrier protein] + a hydroperoxide = N(6)-[(R)-lipoyl]-L-lysyl-[lipoyl-carrier protein] + an alcohol + H2O. Its function is as follows. Antioxidant protein with alkyl hydroperoxidase activity. Required for the reduction of the AhpC active site cysteine residues and for the regeneration of the AhpC enzyme activity. In Mycolicibacterium smegmatis (strain ATCC 700084 / mc(2)155) (Mycobacterium smegmatis), this protein is Alkyl hydroperoxide reductase AhpD.